We begin with the raw amino-acid sequence, 527 residues long: Palmitoleoyl-protein carboxylesterase NOTUM (527 aa).

The signal sequence occupies residues 1-19 (MKSYLILNTLLLSLLKING). 3 N-linked (GlcNAc...) asparagine glycosylation sites follow: asparagine 64, asparagine 86, and asparagine 104. The active-site Charge relay system is serine 203. N-linked (GlcNAc...) asparagine glycosylation occurs at asparagine 249. Catalysis depends on charge relay system residues aspartate 311 and histidine 359. Asparagine 451 carries N-linked (GlcNAc...) asparagine glycosylation.

It belongs to the pectinacetylesterase family. Notum subfamily. As to expression, expressed in the anterior pole.

Its subcellular location is the secreted. The catalysed reaction is [Wnt protein]-O-(9Z)-hexadecenoyl-L-serine + H2O = [Wnt protein]-L-serine + (9Z)-hexadecenoate + H(+). Its function is as follows. Carboxylesterase that acts as a key negative regulator of the Wnt signaling pathway. Acts by specifically mediating depalmitoleoylation of WNT proteins. Serine palmitoleoylation of WNT proteins is required for efficient binding to frizzled receptors. Promotes head regeneration following amputation by inhibiting the Wnt signaling pathway. This Schmidtea mediterranea (Freshwater planarian flatworm) protein is Palmitoleoyl-protein carboxylesterase NOTUM.